A 342-amino-acid chain; its full sequence is Protein RecA 1 (342 aa).

68–75 contacts ATP; it reads GNESSGKT.

It belongs to the RecA family.

It is found in the cytoplasm. Functionally, can catalyze the hydrolysis of ATP in the presence of single-stranded DNA, the ATP-dependent uptake of single-stranded DNA by duplex DNA, and the ATP-dependent hybridization of homologous single-stranded DNAs. It interacts with LexA causing its activation and leading to its autocatalytic cleavage. The protein is Protein RecA 1 of Myxococcus xanthus.